The primary structure comprises 83 residues: Small ribosomal subunit protein bS16 (83 aa).

Belongs to the bacterial ribosomal protein bS16 family.

In Pseudomonas aeruginosa (strain LESB58), this protein is Small ribosomal subunit protein bS16.